The following is a 508-amino-acid chain: Photosystem II CP47 reaction center protein (508 aa).

The next 6 helical transmembrane spans lie at 21-36 (SVHI…WAGS), 101-115 (IVFS…IWHW), 140-156 (GIHL…FGVF), 203-218 (IAAG…FHLS), 237-252 (VLSS…AFVV), and 457-472 (SFAL…HGAR).

This sequence belongs to the PsbB/PsbC family. PsbB subfamily. PSII is composed of 1 copy each of membrane proteins PsbA, PsbB, PsbC, PsbD, PsbE, PsbF, PsbH, PsbI, PsbJ, PsbK, PsbL, PsbM, PsbT, PsbX, PsbY, PsbZ, Psb30/Ycf12, at least 3 peripheral proteins of the oxygen-evolving complex and a large number of cofactors. It forms dimeric complexes. Requires Binds multiple chlorophylls. PSII binds additional chlorophylls, carotenoids and specific lipids. as cofactor.

The protein resides in the plastid. The protein localises to the chloroplast thylakoid membrane. One of the components of the core complex of photosystem II (PSII). It binds chlorophyll and helps catalyze the primary light-induced photochemical processes of PSII. PSII is a light-driven water:plastoquinone oxidoreductase, using light energy to abstract electrons from H(2)O, generating O(2) and a proton gradient subsequently used for ATP formation. The protein is Photosystem II CP47 reaction center protein of Jasminum nudiflorum (Winter jasmine).